A 466-amino-acid chain; its full sequence is Acetylornithine aminotransferase, mitochondrial (466 aa).

Position 308 is an N6-(pyridoxal phosphate)lysine (K308).

It belongs to the class-III pyridoxal-phosphate-dependent aminotransferase family. Pyridoxal 5'-phosphate serves as cofactor.

It localises to the mitochondrion matrix. The catalysed reaction is N(2)-acetyl-L-ornithine + 2-oxoglutarate = N-acetyl-L-glutamate 5-semialdehyde + L-glutamate. It functions in the pathway amino-acid biosynthesis; L-arginine biosynthesis; N(2)-acetyl-L-ornithine from L-glutamate: step 4/4. The chain is Acetylornithine aminotransferase, mitochondrial (ARG8) from Debaryomyces hansenii (strain ATCC 36239 / CBS 767 / BCRC 21394 / JCM 1990 / NBRC 0083 / IGC 2968) (Yeast).